The following is a 70-amino-acid chain: Large ribosomal subunit protein uL29 (70 aa).

The protein belongs to the universal ribosomal protein uL29 family.

This chain is Large ribosomal subunit protein uL29, found in Clostridium novyi (strain NT).